A 204-amino-acid chain; its full sequence is Elongation factor Ts (204 aa).

An involved in Mg(2+) ion dislocation from EF-Tu region spans residues T87 to V90.

Belongs to the EF-Ts family.

The protein resides in the cytoplasm. Functionally, associates with the EF-Tu.GDP complex and induces the exchange of GDP to GTP. It remains bound to the aminoacyl-tRNA.EF-Tu.GTP complex up to the GTP hydrolysis stage on the ribosome. The chain is Elongation factor Ts from Frankia casuarinae (strain DSM 45818 / CECT 9043 / HFP020203 / CcI3).